Reading from the N-terminus, the 51-residue chain is Insulin (51 aa).

Disulfide bonds link C7-C37, C19-C50, and C36-C41.

Belongs to the insulin family. In terms of assembly, heterodimer of a B chain and an A chain linked by two disulfide bonds.

It localises to the secreted. Insulin decreases blood glucose concentration. It increases cell permeability to monosaccharides, amino acids and fatty acids. It accelerates glycolysis, the pentose phosphate cycle, and glycogen synthesis in liver. The protein is Insulin (INS) of Alligator mississippiensis (American alligator).